Reading from the N-terminus, the 101-residue chain is Small ribosomal subunit protein uS14 (101 aa).

Residues 46-72 form a disordered region; that stretch reads FELNRQPRDASPVRVRNRDSRDGRPRG. Positions 61–70 are enriched in basic and acidic residues; the sequence is RNRDSRDGRP.

This sequence belongs to the universal ribosomal protein uS14 family. Part of the 30S ribosomal subunit. Contacts proteins S3 and S10.

In terms of biological role, binds 16S rRNA, required for the assembly of 30S particles and may also be responsible for determining the conformation of the 16S rRNA at the A site. This is Small ribosomal subunit protein uS14 from Corynebacterium diphtheriae (strain ATCC 700971 / NCTC 13129 / Biotype gravis).